Reading from the N-terminus, the 362-residue chain is Alanine racemase (362 aa).

Lys33 (proton acceptor; specific for D-alanine) is an active-site residue. Lys33 carries the post-translational modification N6-(pyridoxal phosphate)lysine. Arg129 is a substrate binding site. Tyr254 functions as the Proton acceptor; specific for L-alanine in the catalytic mechanism. Met302 is a substrate binding site.

The protein belongs to the alanine racemase family. The cofactor is pyridoxal 5'-phosphate.

It carries out the reaction L-alanine = D-alanine. It participates in amino-acid biosynthesis; D-alanine biosynthesis; D-alanine from L-alanine: step 1/1. Functionally, catalyzes the interconversion of L-alanine and D-alanine. May also act on other amino acids. The polypeptide is Alanine racemase (alr) (Xylella fastidiosa (strain 9a5c)).